A 421-amino-acid polypeptide reads, in one-letter code: Outer capsid protein P8 (421 aa).

Belongs to the phytoreovirus outer capsid protein P8 family. Homotrimer. Homomultimer. Interacts with host peroxisomal glycolate oxidase (GOX). This interaction mediates its relocation to virus factories peripheral to host peroxisomes.

The protein resides in the virion. It is found in the host cytoplasm. Capsid protein which self-assembles to form the outer icosahedral capsid with a T=13 symmetry, about 70 nm in diameter and consisting of 780 molecules capsid proteins. This is Outer capsid protein P8 (S8) from Rice dwarf virus (isolate S) (RDV).